The chain runs to 247 residues: MMIPKGEVVELGKRGNFRDILKELSATGFTGYLEVSYKKGELSRAKVLFSNGKIVAAGIKRVISKSEIVGEKALEELLGLESCVVDVYALDEGKVAKALEWNRNAVVEHLPETEVEVEGGLTEEIITTPDEREAILKKYGIKMPSEEEIDQIIMNALDGSYDVIAATTSAPGDFESLKNSLISTAELYLGKMSKKVVDVINDCKSAEELVERFDEIRSAAKSLVIFIPRKKIDEMLSEMERLIGESI.

This is an uncharacterized protein from Archaeoglobus fulgidus (strain ATCC 49558 / DSM 4304 / JCM 9628 / NBRC 100126 / VC-16).